Here is a 413-residue protein sequence, read N- to C-terminus: DnaJ protein homolog (413 aa).

Residues 10–75 (NTKYYEILGV…REIYDQYGED (66 aa)) enclose the J domain. The CR-type zinc-finger motif lies at 133 to 217 (GTSKKLSLSR…CKGEKVVQEK (85 aa)). CXXCXGXG motif repeat units lie at residues 146–153 (CSKCKGKG), 162–169 (CPGCQGSG), 189–196 (CNECKGTG), and 205–212 (CSQCKGEK). The segment at 387 to 413 (RRKQAQEAYDEDEDMHGGAQRVQCAQQ) is disordered. Cys410 is modified (cysteine methyl ester). Cys410 is lipidated: S-farnesyl cysteine. Residues 411 to 413 (AQQ) constitute a propeptide, removed in mature form.

As to expression, expressed in seedlings in all tissues, but exceedingly high levels in hypocotyledons and roots.

The protein resides in the cell membrane. Functionally, plays a continuous role in plant development probably in the structural organization of compartments. The sequence is that of DnaJ protein homolog (DNAJ1) from Cucumis sativus (Cucumber).